The chain runs to 362 residues: Transcription factor Sox-7 (362 aa).

Residues 21–41 are disordered; sequence EDLSDGLSPHRSPREKGSETR. Residues 32-41 are compositionally biased toward basic and acidic residues; it reads SPREKGSETR. Residues 42–110 constitute a DNA-binding region (HMG box); sequence IRRPMNAFMV…QHMQDYPNYK (69 aa). Positions 245–362 constitute a Sox C-terminal domain; that stretch reads QTGSSMIPPV…ATYYNSYSVS (118 aa).

Expressed in the embryonic pronephric sinus as well as posterior cardinal veins.

It is found in the nucleus. Its function is as follows. Transcription factor. Binds to the DNA sequence 5'-AACAAT-3'. Acts downstream of vegt and upstream of nodal signaling to promote endodermal and mesodermal differentiation by promoting vegt-induced expression of both endodermal genes (including endodermin) and mesodermal genes (including snai1/snail and snai2/slug). Induces expression of multiple nodal genes (including nodal, nodal2, nodal4, nodal5 and nodal6) and binds directly to sites within the promoter of the nodal5 gene. The endodermal and mesodermal specification pathways then interact to initiate cardiogenesis. Acts partially redundantly with sox18 during cardiogenesis. Also acts as an antagonist of beta-catenin signaling. Regulates (possibly indirectly) development of the pronephros, the functional larval kidney. The protein is Transcription factor Sox-7 of Xenopus tropicalis (Western clawed frog).